The primary structure comprises 123 residues: Cell division protein SepF (123 aa).

It belongs to the SepF family. As to quaternary structure, homodimer. Interacts with FtsZ.

It is found in the cytoplasm. In terms of biological role, cell division protein that is part of the divisome complex and is recruited early to the Z-ring. Probably stimulates Z-ring formation, perhaps through the cross-linking of FtsZ protofilaments. Its function overlaps with FtsA. The protein is Cell division protein SepF of Tropheryma whipplei (strain TW08/27) (Whipple's bacillus).